Here is a 190-residue protein sequence, read N- to C-terminus: Crossover junction endodeoxyribonuclease RuvC (190 aa).

Residues aspartate 8, glutamate 67, and aspartate 139 contribute to the active site. Mg(2+) contacts are provided by aspartate 8, glutamate 67, and aspartate 139.

This sequence belongs to the RuvC family. As to quaternary structure, homodimer which binds Holliday junction (HJ) DNA. The HJ becomes 2-fold symmetrical on binding to RuvC with unstacked arms; it has a different conformation from HJ DNA in complex with RuvA. In the full resolvosome a probable DNA-RuvA(4)-RuvB(12)-RuvC(2) complex forms which resolves the HJ. The cofactor is Mg(2+).

It is found in the cytoplasm. The catalysed reaction is Endonucleolytic cleavage at a junction such as a reciprocal single-stranded crossover between two homologous DNA duplexes (Holliday junction).. Its function is as follows. The RuvA-RuvB-RuvC complex processes Holliday junction (HJ) DNA during genetic recombination and DNA repair. Endonuclease that resolves HJ intermediates. Cleaves cruciform DNA by making single-stranded nicks across the HJ at symmetrical positions within the homologous arms, yielding a 5'-phosphate and a 3'-hydroxyl group; requires a central core of homology in the junction. The consensus cleavage sequence is 5'-(A/T)TT(C/G)-3'. Cleavage occurs on the 3'-side of the TT dinucleotide at the point of strand exchange. HJ branch migration catalyzed by RuvA-RuvB allows RuvC to scan DNA until it finds its consensus sequence, where it cleaves and resolves the cruciform DNA. This chain is Crossover junction endodeoxyribonuclease RuvC, found in Actinobacillus succinogenes (strain ATCC 55618 / DSM 22257 / CCUG 43843 / 130Z).